We begin with the raw amino-acid sequence, 488 residues long: Protein nucleotidyltransferase YdiU (488 aa).

G91, G93, R94, K114, D126, G127, R177, and R184 together coordinate ATP. D253 (proton acceptor) is an active-site residue. Mg(2+) is bound by residues N254 and D263. Residue D263 coordinates ATP.

It belongs to the SELO family. It depends on Mg(2+) as a cofactor. Requires Mn(2+) as cofactor.

It catalyses the reaction L-seryl-[protein] + ATP = 3-O-(5'-adenylyl)-L-seryl-[protein] + diphosphate. It carries out the reaction L-threonyl-[protein] + ATP = 3-O-(5'-adenylyl)-L-threonyl-[protein] + diphosphate. The enzyme catalyses L-tyrosyl-[protein] + ATP = O-(5'-adenylyl)-L-tyrosyl-[protein] + diphosphate. The catalysed reaction is L-histidyl-[protein] + UTP = N(tele)-(5'-uridylyl)-L-histidyl-[protein] + diphosphate. It catalyses the reaction L-seryl-[protein] + UTP = O-(5'-uridylyl)-L-seryl-[protein] + diphosphate. It carries out the reaction L-tyrosyl-[protein] + UTP = O-(5'-uridylyl)-L-tyrosyl-[protein] + diphosphate. In terms of biological role, nucleotidyltransferase involved in the post-translational modification of proteins. It can catalyze the addition of adenosine monophosphate (AMP) or uridine monophosphate (UMP) to a protein, resulting in modifications known as AMPylation and UMPylation. The protein is Protein nucleotidyltransferase YdiU of Bacillus thuringiensis subsp. konkukian (strain 97-27).